Consider the following 419-residue polypeptide: MTTQLEQAWELAKQRFAAVGIDVEEALRQLDRLPVSMHCWQGDDVSGFENPEGSLTGGIQATGNYPGKARNASELRADLEQAMRLIPGPKRLNLHAIYLESDTPVSRDQIKPEHFKNWVEWAKANQLGLDFNPSCFSHPLSADGFTLSHADDSIRQFWIDHCKASRRVSAYFGEQLGTPSVMNIWIPDGMKDITVDRLAPRQRLLAALDEVISEKLDPAHHIDAVESKLFGIGAESYTVGSNEFYMGYATSRQTALCLDAGHFHPTEVISDKISAAMLYVPQLLLHVSRPVRWDSDHVVLLDDETQAIASEIVRHDLFDRVHIGLDFFDASINRIAAWIIGTRNMKKALLRALLEPTAELRKLEAAGDYTARLALLEEQKSLPWQAVWEMYCQRHDTPAGSEWLESVRAYEKETLSRRG.

Mn(2+) contacts are provided by His-262, Asp-294, and Asp-296.

This sequence belongs to the rhamnose isomerase family. As to quaternary structure, homotetramer. The cofactor is Mn(2+).

The protein resides in the cytoplasm. The catalysed reaction is L-rhamnopyranose = L-rhamnulose. Its pathway is carbohydrate degradation; L-rhamnose degradation; glycerone phosphate from L-rhamnose: step 1/3. Catalyzes the interconversion of L-rhamnose and L-rhamnulose. The protein is L-rhamnose isomerase of Escherichia coli O157:H7.